A 384-amino-acid chain; its full sequence is Putative glutamate--cysteine ligase 2 (384 aa).

This sequence belongs to the glutamate--cysteine ligase type 2 family. YbdK subfamily.

It carries out the reaction L-cysteine + L-glutamate + ATP = gamma-L-glutamyl-L-cysteine + ADP + phosphate + H(+). In terms of biological role, ATP-dependent carboxylate-amine ligase which exhibits weak glutamate--cysteine ligase activity. The chain is Putative glutamate--cysteine ligase 2 from Dechloromonas aromatica (strain RCB).